The primary structure comprises 375 residues: 2-oxoglutarate synthase subunit KorA (375 aa).

As to quaternary structure, heterotetramer of the KorA, KorB, KorC and KorD subunits.

The catalysed reaction is 2 oxidized [2Fe-2S]-[ferredoxin] + 2-oxoglutarate + CoA = succinyl-CoA + 2 reduced [2Fe-2S]-[ferredoxin] + CO2 + H(+). This Methanothermobacter marburgensis (strain ATCC BAA-927 / DSM 2133 / JCM 14651 / NBRC 100331 / OCM 82 / Marburg) (Methanobacterium thermoautotrophicum) protein is 2-oxoglutarate synthase subunit KorA (korA).